Reading from the N-terminus, the 160-residue chain is Cytochrome b6-f complex subunit 4 (160 aa).

Transmembrane regions (helical) follow at residues 36-56 (LLYV…GLAI), 95-115 (LLGV…PFIE), and 131-151 (TIFL…TMPI).

It belongs to the cytochrome b family. PetD subfamily. The 4 large subunits of the cytochrome b6-f complex are cytochrome b6, subunit IV (17 kDa polypeptide, petD), cytochrome f and the Rieske protein, while the 4 small subunits are petG, petL, petM and petN. The complex functions as a dimer.

Its subcellular location is the plastid. The protein localises to the chloroplast thylakoid membrane. Component of the cytochrome b6-f complex, which mediates electron transfer between photosystem II (PSII) and photosystem I (PSI), cyclic electron flow around PSI, and state transitions. This is Cytochrome b6-f complex subunit 4 from Porphyra purpurea (Red seaweed).